Here is a 665-residue protein sequence, read N- to C-terminus: Filensin (665 aa).

Residues 1 to 40 (MYRRSYVFQTRKEQYEHADEASRAAEPERPADEGWAGATS) are head. Position 5 is a phosphoserine (serine 5). The IF rod domain maps to 40 to 320 (SLAALQGLGE…RIIEIEGNRL (281 aa)). A coil 1A region spans residues 41 to 75 (LAALQGLGERVAAHVQRARALEQRHAGLRRQLDAF). The residue at position 42 (alanine 42) is an N-acetylalanine. Positions 76-84 (QRLGELAGP) are linker 1. The tract at residues 85–184 (EDALARQVES…RHKKNLLEVQ (100 aa)) is coil 1B. The linker 12 stretch occupies residues 185–201 (TYISILQQIIHTTPPAS). The coil 2 stretch occupies residues 202–320 (IVTSGMREEK…RIIEIEGNRL (119 aa)). The interval 321 to 665 (TSAFIETPIP…DKKKSGEKSS (345 aa)) is tail. Residues serine 341 and serine 420 each carry the phosphoserine modification. Disordered regions lie at residues 410-439 (SKFE…QISK) and 506-614 (YDGQ…KGPP). The N-myristoyl glycine moiety is linked to residue glycine 434. Serine 513 bears the Phosphoserine mark. The segment covering 556 to 571 (PEEKREGEERDEESRR) has biased composition (basic and acidic residues). At serine 665 the chain carries Phosphoserine.

This sequence belongs to the intermediate filament family. Part of a complex required for lens intermediate filament formation composed of BFSP1, BFSP2 and CRYAA. Identified in a complex that contains VIM, EZR, AHNAK, BFSP1, BFSP2, ANK2, PLEC, PRX and spectrin. Found in a complex composed of PPL (via C-terminal linker domain), BFSP1 and BFSP2 in the retinal lens. Within the complex interacts with BFSP2. Interacts (via C-terminus) with MIP (via C-terminus) in aged lens fiber cells. Post-translationally, proteolytically cleaved during lens cell fiber differentiation with increased fragmentation as fiber cell age increases. In terms of processing, myristoylated at Gly-434 following proteolytic cleavage at Asp-433. Acetylated at Ala-42 following proteolytic cleavage at Leu-41. As to expression, expressed in the cortex and nucleus of the retina lens (at protein level).

The protein localises to the cell membrane. Its subcellular location is the cytoplasm. It is found in the cytoskeleton. It localises to the cell cortex. In terms of biological role, required for the correct formation of lens intermediate filaments as part of a complex composed of BFSP1, BFSP2 and CRYAA. Involved in altering the calcium regulation of MIP water permeability. In Homo sapiens (Human), this protein is Filensin (BFSP1).